The following is a 171-amino-acid chain: Dual specificity protein phosphatase OPG106 (171 aa).

Residues 1 to 27 (MDKKSLYKYLLLRSTGDMHKAKSPTIM) are dimerization. Residues 23-171 (SPTIMTRVTN…IIEKYVIDKN (149 aa)) form the Tyrosine-protein phosphatase domain. Cys-110 acts as the Phosphocysteine intermediate in catalysis.

Belongs to the protein-tyrosine phosphatase family. Non-receptor class dual specificity subfamily. In terms of assembly, homodimer.

Its subcellular location is the virion. It is found in the host cytoplasm. The catalysed reaction is O-phospho-L-tyrosyl-[protein] + H2O = L-tyrosyl-[protein] + phosphate. It catalyses the reaction O-phospho-L-seryl-[protein] + H2O = L-seryl-[protein] + phosphate. Its function is as follows. Serine/tyrosine phosphatase which down-regulates cellular antiviral response by dephosphorylating activated host STAT1 and blocking interferon (IFN)-stimulated innate immune responses. Dephosphorylates the OPG144 protein. This is Dual specificity protein phosphatase OPG106 (OPG106) from Bos taurus (Bovine).